The primary structure comprises 715 residues: Fatty acid oxidation complex subunit alpha (715 aa).

Positions 1-190 are enoyl-CoA hydratase/isomerase; it reads MIYQGKAITV…KVGAVDAVVA (190 aa). D297 contributes to the substrate binding site. Residues 312–715 are 3-hydroxyacyl-CoA dehydrogenase; it reads HDAKQAAVLG…MAKNGQRFFN (404 aa). NAD(+) contacts are provided by residues M325, D344, 401 to 403, K408, and S430; that span reads VVE. H451 (for 3-hydroxyacyl-CoA dehydrogenase activity) is an active-site residue. N454 serves as a coordination point for NAD(+). The substrate site is built by N501 and Y660.

In the N-terminal section; belongs to the enoyl-CoA hydratase/isomerase family. This sequence in the C-terminal section; belongs to the 3-hydroxyacyl-CoA dehydrogenase family. As to quaternary structure, heterotetramer of two alpha chains (FadB) and two beta chains (FadA).

It catalyses the reaction a (3S)-3-hydroxyacyl-CoA + NAD(+) = a 3-oxoacyl-CoA + NADH + H(+). The enzyme catalyses a (3S)-3-hydroxyacyl-CoA = a (2E)-enoyl-CoA + H2O. It carries out the reaction a 4-saturated-(3S)-3-hydroxyacyl-CoA = a (3E)-enoyl-CoA + H2O. The catalysed reaction is (3S)-3-hydroxybutanoyl-CoA = (3R)-3-hydroxybutanoyl-CoA. It catalyses the reaction a (3Z)-enoyl-CoA = a 4-saturated (2E)-enoyl-CoA. The enzyme catalyses a (3E)-enoyl-CoA = a 4-saturated (2E)-enoyl-CoA. The protein operates within lipid metabolism; fatty acid beta-oxidation. Involved in the aerobic and anaerobic degradation of long-chain fatty acids via beta-oxidation cycle. Catalyzes the formation of 3-oxoacyl-CoA from enoyl-CoA via L-3-hydroxyacyl-CoA. It can also use D-3-hydroxyacyl-CoA and cis-3-enoyl-CoA as substrate. The polypeptide is Fatty acid oxidation complex subunit alpha (Ectopseudomonas oleovorans (Pseudomonas oleovorans)).